Here is a 359-residue protein sequence, read N- to C-terminus: Trans-enoyl reductase FSL5 (359 aa).

Residue 47-50 (IDGK) coordinates NADP(+). Residue 134–141 (SGVGTIGL) participates in substrate binding. Residues 169–172 (STAT), 192–195 (SPHN), Tyr210, and 257–258 (LE) contribute to the NADP(+) site. 277-281 (GPTLL) contacts substrate. Residue 346 to 347 (VS) coordinates NADP(+).

Belongs to the zinc-containing alcohol dehydrogenase family. As to quaternary structure, monomer.

It participates in secondary metabolite biosynthesis. Functionally, trans-enoyl reductase; part of the gene cluster that mediates the biosynthesis of fusarielins F, G and H, decaketide compounds with 5 methylations and a decaline core that act as mycoestrogens as they stimulate growth of MCF-7 breast cancer cells. The initial compound in the pathway is produced by the reducing polyketide synthase FSL1. FSL1 lacks an active enoyl reductase (ER) domain and biosynthesis of fusarielins relies on the trans-acting enoyl reductase FSL5, before it is released through hydrolysis catalyzed by the thioesterase FSL2. Fusarielins F, G, and H have a C11=C12 cis double bond and is fully reduced between C10 and C11 and between C12 and C13. FSL3 can be involved in the formation of the C11=C12 cis double bond by moving a hypothetical C10=C11 or C12=C13 trans double bond to form prefusarielin. Prefusarielin is oxygenated at C15 and C16 by the cytochrome P450 monooxygenase FSL4, resulting in fusarielin F, which subsequently is epoxidized into fusarielin G by the same enzyme. The final step in the pathway is a reduction of the carboxylic acid moiety to yield fusarielin H via a still undetermined mechanism. The protein is Trans-enoyl reductase FSL5 of Gibberella zeae (strain ATCC MYA-4620 / CBS 123657 / FGSC 9075 / NRRL 31084 / PH-1) (Wheat head blight fungus).